The chain runs to 295 residues: Acetylglutamate kinase (295 aa).

Substrate-binding positions include 66-67 (GG), Arg88, and Asn193.

This sequence belongs to the acetylglutamate kinase family. ArgB subfamily.

It localises to the cytoplasm. It carries out the reaction N-acetyl-L-glutamate + ATP = N-acetyl-L-glutamyl 5-phosphate + ADP. It functions in the pathway amino-acid biosynthesis; L-arginine biosynthesis; N(2)-acetyl-L-ornithine from L-glutamate: step 2/4. Catalyzes the ATP-dependent phosphorylation of N-acetyl-L-glutamate. This chain is Acetylglutamate kinase, found in Bradyrhizobium diazoefficiens (strain JCM 10833 / BCRC 13528 / IAM 13628 / NBRC 14792 / USDA 110).